A 267-amino-acid chain; its full sequence is Small ribosomal subunit protein mS23 (267 aa).

The disordered stretch occupies residues 230 to 267 (VKTASKDGKSSNGSMGAEDVVEKTTSAWETEFVEEESS).

This sequence belongs to the mitochondrion-specific ribosomal protein mS23 family. Component of the mitochondrial small ribosomal subunit.

Its subcellular location is the mitochondrion. The chain is Small ribosomal subunit protein mS23 (RSM25) from Meyerozyma guilliermondii (strain ATCC 6260 / CBS 566 / DSM 6381 / JCM 1539 / NBRC 10279 / NRRL Y-324) (Yeast).